The primary structure comprises 537 residues: Tyrosine-protein kinase Fyn (537 aa).

Gly-2 carries N-myristoyl glycine lipidation. 2 S-palmitoyl cysteine lipidation sites follow: Cys-3 and Cys-6. Thr-12 carries the phosphothreonine; by PKC modification. In terms of domain architecture, SH3 spans Thr-82 to Ser-143. Residues Trp-149 to Cys-246 enclose the SH2 domain. The Protein kinase domain maps to Leu-271–Phe-524. Residues Leu-277 to Val-285 and Lys-299 each bind ATP. The active-site Proton acceptor is Asp-390. Position 420 is a phosphotyrosine; by autocatalysis (Tyr-420). Tyr-531 is modified (phosphotyrosine).

This sequence belongs to the protein kinase superfamily. Tyr protein kinase family. SRC subfamily. Associates through its SH3 domain, to the p85 subunit of phosphatidylinositol 3-kinase. The cofactor is Mn(2+).

It catalyses the reaction L-tyrosyl-[protein] + ATP = O-phospho-L-tyrosyl-[protein] + ADP + H(+). With respect to regulation, inhibited by phosphorylation of Tyr-531 by leukocyte common antigen and activated by dephosphorylation of this site. In terms of biological role, tyrosine-protein kinase implicated in the control of cell growth. Plays a role in the regulation of intracellular calcium levels. Required in brain development and mature brain function with important roles in the regulation of axon growth, axon guidance, and neurite extension. Blocks axon outgrowth and attraction induced by ntn1 by phosphorylating its receptor ddc. The sequence is that of Tyrosine-protein kinase Fyn (fyn) from Xenopus laevis (African clawed frog).